Here is a 346-residue protein sequence, read N- to C-terminus: MSSSKSIDLKSKFLKVYDTLKSDLINDPAFEFDDDSRQWIQKMLDYNVPGGKLNRGLSVVDSYQLLKGGELSDDEIFLSSALGWCIEWLQAYFLVLDDIMDESHTRRGQPCWFRLPKVGMIAANDGILLRNHVPRILKKHFRGKPYYVDLVDLFNEVEFQTASGQMIDLITTLVGEKDLSKYSLSIHRRIVQYKTAYYSFYLPVACALLMFGEDLDKHVEVKNVLVEMGTYFQVQDDYLDCFGAPEVIGKIGTDIEDFKCSWLVVKALELANEEQKKTLHENYGKKDPASVAKVKEVYHTLNLQAVFEDYEATSYKKLITSIENHPSKAVQAVLKSFLGKIYKRQK.

Isopentenyl diphosphate-binding residues include Lys52, Arg55, and Gln90. Mg(2+) is bound by residues Asp97 and Asp101. The DDXXD motif motif lies at 97-101 (DDIMD). Arg106 lines the dimethylallyl diphosphate pocket. Residue Arg107 participates in isopentenyl diphosphate binding. The dimethylallyl diphosphate site is built by Lys194, Thr195, and Gln233. The DDXXD motif signature appears at 236 to 240 (DDYLD). The dimethylallyl diphosphate site is built by Lys250 and Lys259.

The protein belongs to the FPP/GGPP synthase family. Requires Mg(2+) as cofactor. Mn(2+) serves as cofactor. In terms of tissue distribution, highly expressed in shoots.

The enzyme catalyses isopentenyl diphosphate + (2E)-geranyl diphosphate = (2E,6E)-farnesyl diphosphate + diphosphate. It catalyses the reaction isopentenyl diphosphate + dimethylallyl diphosphate = (2E)-geranyl diphosphate + diphosphate. It functions in the pathway isoprenoid biosynthesis; farnesyl diphosphate biosynthesis; farnesyl diphosphate from geranyl diphosphate and isopentenyl diphosphate: step 1/1. It participates in isoprenoid biosynthesis; geranyl diphosphate biosynthesis; geranyl diphosphate from dimethylallyl diphosphate and isopentenyl diphosphate: step 1/1. Catalyzes the sequential condensation of isopentenyl pyrophosphate (IPP) with the allylic pyrophosphates, dimethylallyl pyrophosphate (DMAPP), and then with the resultant geranylpyrophosphate (GPP) to the ultimate product farnesyl pyrophosphate (FPP). Has a 4.5 time greater affinity for GPP versus DMAPP. In Artemisia spiciformis (Spiked big sagebrush), this protein is Farnesyl diphosphate synthase 1 (FDS-1).